Consider the following 341-residue polypeptide: Thromboxane A2 receptor (341 aa).

At 1 to 29 the chain is on the extracellular side; that stretch reads MWPNGTSLGACFRPVNITLQERRAIASPW. Asn4 and Asn16 each carry an N-linked (GlcNAc...) asparagine glycan. Residues 30-52 traverse the membrane as a helical segment; that stretch reads FAASFCALGLGSNLLALSVLAGA. Over 53-65 the chain is Cytoplasmic; the sequence is RPGAGPRSSFLAL. Residues 66–86 form a helical membrane-spanning segment; the sequence is LCGLVLTDFLGLLVTGAIVAS. Over 87–105 the chain is Extracellular; it reads QHAALLDWRATDPSCRLCY. Cys104 and Cys181 are disulfide-bonded. The chain crosses the membrane as a helical span at residues 106-127; it reads FMGVAMVFFGLCPLLLGAAMAS. Residues 128–147 lie on the Cytoplasmic side of the membrane; sequence ERFVGITRPFSRPTATSRRA. A helical transmembrane segment spans residues 148 to 170; it reads WATVGLVWVAAGALGLLPLLGLG. Topologically, residues 171–191 are extracellular; it reads RYSVQYPGSWCFLTLGTQRGD. A helical transmembrane segment spans residues 192-217; that stretch reads VVFGLIFALLGSASVGLSLLLNTVSV. Topologically, residues 218–244 are cytoplasmic; that stretch reads ATLCRVYHTREATQRPRDCEVEMMVQL. The chain crosses the membrane as a helical span at residues 245–268; sequence VGIMVVATVCWMPLLVFIMQTLLQ. Residues 269 to 287 lie on the Extracellular side of the membrane; the sequence is TPPVMSFSGQLLRATEHQL. A helical membrane pass occupies residues 288–309; it reads LIYLRVATWNQILDPWVYILFR. Topologically, residues 310-341 are cytoplasmic; that stretch reads RSVLRRLHPRFSSQLQAVSLRRPPAQAMLSGP. A Phosphoserine modification is found at Ser328.

Belongs to the G-protein coupled receptor 1 family. Interacts with RPGRIP1L. Interacts with RACK1; the interaction regulates TBXA2R cell surface expression.

The protein localises to the cell membrane. Receptor for thromboxane A2 (TXA2), a potent stimulator of platelet aggregation. The activity of this receptor is mediated by a G-protein that activates a phosphatidylinositol-calcium second messenger system. In the kidney, the binding of TXA2 to glomerular TP receptors causes intense vasoconstriction. Activates phospholipase C and adenylyl cyclase. The chain is Thromboxane A2 receptor (Tbxa2r) from Mus musculus (Mouse).